We begin with the raw amino-acid sequence, 143 residues long: Peptide methionine sulfoxide reductase MsrB (143 aa).

The MsrB domain maps to 5–127 (KEKRLKELNR…NSAALKFIPK (123 aa)). Cys116 acts as the Nucleophile in catalysis.

This sequence belongs to the MsrB Met sulfoxide reductase family.

The catalysed reaction is L-methionyl-[protein] + [thioredoxin]-disulfide + H2O = L-methionyl-(R)-S-oxide-[protein] + [thioredoxin]-dithiol. The protein is Peptide methionine sulfoxide reductase MsrB of Bacillus pumilus (strain SAFR-032).